The primary structure comprises 249 residues: General transcription factor IIF subunit 2 (249 aa).

Alanine 2 carries the post-translational modification N-acetylalanine. Lysine 22, lysine 33, and lysine 137 each carry N6-acetyllysine. Position 142 is a phosphoserine (serine 142). 2 residues coordinate DNA: glycine 227 and histidine 229. Residue serine 248 is modified to Phosphoserine.

The protein belongs to the TFIIF beta subunit family. Heterodimer of an alpha and a beta subunit. Interacts with HTATSF1 and GPBP1. Interacts with URI1. Interacts with GTF2B (via N-terminus); this interaction is inhibited in presence of GTF2F1. Part of TBP-based Pol II pre-initiation complex (PIC), in which Pol II core assembles with general transcription factors and other specific initiation factors including GTF2E1, GTF2E2, GTF2F1, GTF2F2, TCEA1, ERCC2, ERCC3, GTF2H2, GTF2H3, GTF2H4, GTF2H5, GTF2A1, GTF2A2, GTF2B and TBP; this large multi-subunit PIC complex mediates DNA unwinding and targets Pol II core to the transcription start site where the first phosphodiester bond forms.

Its subcellular location is the nucleus. Functionally, TFIIF is a general transcription initiation factor that binds to RNA polymerase II and helps to recruit it to the initiation complex in collaboration with TFIIB. It promotes transcription elongation. In Rattus norvegicus (Rat), this protein is General transcription factor IIF subunit 2 (Gtf2f2).